Consider the following 296-residue polypeptide: MEKIQQAYLYMLKVEKQFSEHTLKSYHDDLEQFNVFLAQEHLDLNAFEYKDARNYLSYLYSKNLKRTSVSRKISTLRSFYEYWMTQDEAVVNPFIQLVHPKKEHYLPHFFYEEEMEALFDTVENDAKKGLRDRVILELLYSTGIRVSELVHIKEQDIDMTSPGVKVLGKGGKERFIPFGEFCKQSMERYLASFKPKLNSNHDYLLVNMKGDPITERGVRYVLNDVVKRTAGVTEIHPHKLRHTFATHMLNQGADLRTVQSLLGHVNLSTTGRYTHVTNEQLRKVYLNAHPRAKKEN.

Residues 1 to 84 (MEKIQQAYLY…TLRSFYEYWM (84 aa)) enclose the Core-binding (CB) domain. The Tyr recombinase domain occupies 105-286 (YLPHFFYEEE…TNEQLRKVYL (182 aa)). Residues Arg145, Lys169, His238, Arg241, and His264 contribute to the active site. Tyr273 functions as the O-(3'-phospho-DNA)-tyrosine intermediate in the catalytic mechanism.

This sequence belongs to the 'phage' integrase family. XerC subfamily. In terms of assembly, forms a cyclic heterotetrameric complex composed of two molecules of XerC and two molecules of XerD.

The protein localises to the cytoplasm. Site-specific tyrosine recombinase, which acts by catalyzing the cutting and rejoining of the recombining DNA molecules. The XerC-XerD complex is essential to convert dimers of the bacterial chromosome into monomers to permit their segregation at cell division. It also contributes to the segregational stability of plasmids. This chain is Tyrosine recombinase XerC, found in Staphylococcus saprophyticus subsp. saprophyticus (strain ATCC 15305 / DSM 20229 / NCIMB 8711 / NCTC 7292 / S-41).